The following is a 230-amino-acid chain: 5'-methylthioadenosine/S-adenosylhomocysteine nucleosidase (230 aa).

Glu-12 functions as the Proton acceptor in the catalytic mechanism. Residues Gly-78, Ile-153, and 174 to 175 (ME) contribute to the substrate site. The Proton donor role is filled by Asp-198.

It belongs to the PNP/UDP phosphorylase family. MtnN subfamily.

It catalyses the reaction S-adenosyl-L-homocysteine + H2O = S-(5-deoxy-D-ribos-5-yl)-L-homocysteine + adenine. The enzyme catalyses S-methyl-5'-thioadenosine + H2O = 5-(methylsulfanyl)-D-ribose + adenine. It carries out the reaction 5'-deoxyadenosine + H2O = 5-deoxy-D-ribose + adenine. It participates in amino-acid biosynthesis; L-methionine biosynthesis via salvage pathway; S-methyl-5-thio-alpha-D-ribose 1-phosphate from S-methyl-5'-thioadenosine (hydrolase route): step 1/2. Catalyzes the irreversible cleavage of the glycosidic bond in both 5'-methylthioadenosine (MTA) and S-adenosylhomocysteine (SAH/AdoHcy) to adenine and the corresponding thioribose, 5'-methylthioribose and S-ribosylhomocysteine, respectively. Also cleaves 5'-deoxyadenosine, a toxic by-product of radical S-adenosylmethionine (SAM) enzymes, into 5-deoxyribose and adenine. This chain is 5'-methylthioadenosine/S-adenosylhomocysteine nucleosidase, found in Shewanella halifaxensis (strain HAW-EB4).